A 674-amino-acid polypeptide reads, in one-letter code: Polyunsaturated fatty acid 5-lipoxygenase (674 aa).

The 117-residue stretch at 2 to 118 (PSYTVTVATG…EVVLRDGRAK (117 aa)) folds into the PLAT domain. Residues Gly-17, Thr-18, Asp-19, Asn-44, Asp-45, Glu-47, Asp-79, and Asp-80 each coordinate Ca(2+). Residues 119–674 (LARDDQIHIL…PDRIPNSVAI (556 aa)) enclose the Lipoxygenase domain. Ser-272 carries the phosphoserine; by MAPKAPK2 modification. The Fe cation site is built by His-368 and His-373. At Ser-524 the chain carries Phosphoserine; by PKA. Fe cation-binding residues include His-551, Asn-555, and Ile-674.

The protein belongs to the lipoxygenase family. Homodimer. Interacts with ALOX5AP and LTC4S. Interacts with COTL1, the interaction is required for stability and efficient catalytic activity. Interacts with PIK3R1; this interaction bridges ALOX5 with CD40 after CD40 ligation in B cells and leads to the production of reactive oxygen species (ROS). Interacts (via PLAT domain) with DICER1 (via Dicer dsRNA-binding fold domain); this interaction enhances arachidonate 5-lipoxygenase activity and modifies the miRNA precursor processing activity of DICER1. The cofactor is Fe cation. Serine phosphorylation by MAPKAPK2 is stimulated by arachidonic acid. Phosphorylation on Ser-524 by PKA has an inhibitory effect. Phosphorylation on Ser-272 prevents export from the nucleus. Phosphorylation at Ser-524 is stimulated by 8-bromo-3',5'-cyclic AMP or prostaglandin E2.

It localises to the cytoplasm. The protein resides in the nucleus matrix. It is found in the nucleus membrane. The protein localises to the perinuclear region. Its subcellular location is the cytosol. It localises to the nucleus envelope. The protein resides in the nucleus intermembrane space. It carries out the reaction (5Z,8Z,11Z,14Z)-eicosatetraenoate + O2 = leukotriene A4 + H2O. It catalyses the reaction 18-HEPE + O2 = (5S)-hydroperoxy-18-hydroxy-(7E,9E,11Z,14Z,16E)-eicosapentaenoate. The catalysed reaction is (18R)-hydroxy-(5Z,8Z,11Z,14Z,16E)-eicosapentaenoate + O2 = (5S)-hydroperoxy-(18R)-hydroxy-(6E,8Z,11Z,14Z,16E)-eicosapentaenoate. The enzyme catalyses (18S)-hydroxy-(5Z,8Z,11Z,14Z,16E)-eicosapentaenoate + O2 = (5S)-hydroperoxy-(18S)-hydroxy-(6E,8Z,11Z,14Z,16E)-eicosapentaenoate. It carries out the reaction (5S)-hydroperoxy-(18S)-hydroxy-(6E,8Z,11Z,14Z,16E)-eicosapentaenoate = (5S,6S)-epoxy-(18S)-hydroxy-(7E,9E,11Z,14Z,16E)-eicosapentaenoate + H2O. It catalyses the reaction (5S)-hydroperoxy-(18R)-hydroxy-(6E,8Z,11Z,14Z,16E)-eicosapentaenoate = (5S,6S)-epoxy-(18R)-hydroxy-(7E,9E,11Z,14Z,16E)-eicosapentaenoate + H2O. The catalysed reaction is (5S)-hydroperoxy-18-hydroxy-(7E,9E,11Z,14Z,16E)-eicosapentaenoate = (5S,6S)-epoxy-18-hydroxy-(7E,9E,11Z,14Z,16E)-eicosapentaenoate + H2O. The enzyme catalyses (5Z,8Z,11Z,14Z)-eicosatetraenoate + O2 = (5S)-hydroperoxy-(6E,8Z,11Z,14Z)-eicosatetraenoate. It carries out the reaction (15S)-hydroxy-(5Z,8Z,11Z,13E)-eicosatetraenoate + O2 = (5S)-hydroperoxy-(15S)-hydroxy-(6E,8Z,11Z,13E)-eicosatetraenoate. It catalyses the reaction (5S)-hydroperoxy-(6E,8Z,11Z,14Z)-eicosatetraenoate = leukotriene A4 + H2O. The catalysed reaction is (5Z,8Z,11Z,14Z)-eicosatetraenoate + O2 = (8S)-hydroperoxy-(5Z,9E,11Z,14Z)-eicosatetraenoate. The enzyme catalyses (5Z,8Z,11Z,14Z)-eicosatetraenoate + O2 = (12S)-hydroperoxy-(5Z,8Z,10E,14Z)-eicosatetraenoate. It carries out the reaction (5Z,8Z)-eicosadienoate + O2 = (5S)-hydroperoxy-(6E,8Z)-eicosadienoate. It catalyses the reaction (12S)-hydroxy-(5Z,8Z,10E,14Z)-eicosatetraenoate + O2 = (5S)-hydroperoxy-(12S)-hydroxy-(6E,8Z,10E,14Z)-eicosatetraenoate. The catalysed reaction is (5Z,8Z,11Z,14Z,17Z)-eicosapentaenoate + O2 = 5-hydroperoxy-(6E,8Z,11Z,14Z,17Z)-eicosapentaenoate. The enzyme catalyses (4Z,7Z,10Z,13Z,16Z,19Z)-docosahexaenoate + O2 = (14S)-hydroperoxy-(4Z,7Z,10Z,12E,16Z,19Z)-docosahexaenoate. It carries out the reaction (4Z,7Z,10Z,13Z,16Z,19Z)-docosahexaenoate + O2 = (7S)-hydroperoxy-(4Z,8E,10Z,13Z,16Z,19Z)-docosahexaenoate. It catalyses the reaction (4Z,7Z,10Z,13Z,16Z,19Z)-docosahexaenoate + O2 = (17S)-hydroperoxy-(4Z,7Z,10Z,13Z,15E,19Z)-docosahexaenoate. It functions in the pathway lipid metabolism; leukotriene A4 biosynthesis. Undergoes a sequential loss of the oxygenase and pseudoperoxidase activities which is dependent on the structural characteristics of the substrate for the reaction, on oxygen concentration and on exposure to phospholipids and calcium. 15-HETE and other 15-mono-hydroxyeicosanoids exhibit the highest inhibitory potencies in their capability of suppressing 5-lipoxygenation of arachidonic acid, whereas the other HETEs, (5S,15S)-dihydroxy-(6E,8Z,11Z,13E)-eicosatetraenoic acid (5,15-diHETE) as well as octadecanoids, are modest or poor inhibitors. The formation of (5S)-hydroperoxy-(15S)-hydroxy-(6E,8Z,11Z,13E)-eicosatetraenoate is strongly stimulated by either hydroperoxypolyenoic fatty acids or arachidonic acid. Arachidonate 5-lipoxygenase and leukotriene A4 synthase activities are allosterically increased by ATP. In terms of biological role, catalyzes the oxygenation of arachidonate ((5Z,8Z,11Z,14Z)-eicosatetraenoate) to 5-hydroperoxyeicosatetraenoate (5-HPETE) followed by the dehydration to 5,6- epoxyeicosatetraenoate (Leukotriene A4/LTA4), the first two steps in the biosynthesis of leukotrienes, which are potent mediators of inflammation. Also catalyzes the oxygenation of arachidonate into 8-hydroperoxyicosatetraenoate (8-HPETE) and 12-hydroperoxyicosatetraenoate (12-HPETE). Displays lipoxin synthase activity being able to convert (15S)-HETE into a conjugate tetraene. Although arachidonate is the preferred substrate, this enzyme can also metabolize oxidized fatty acids derived from arachidonate such as (15S)-HETE, eicosapentaenoate (EPA) such as (18R)- and (18S)-HEPE or docosahexaenoate (DHA) which lead to the formation of specialized pro-resolving mediators (SPM) lipoxin and resolvins E and D respectively, therefore it participates in anti-inflammatory responses. Oxidation of DHA directly inhibits endothelial cell proliferation and sprouting angiogenesis via peroxisome proliferator-activated receptor gamma (PPARgamma). It does not catalyze the oxygenation of linoleic acid and does not convert (5S)-HETE to lipoxin isomers. In addition to inflammatory processes, it participates in dendritic cell migration, wound healing through an antioxidant mechanism based on heme oxygenase-1 (HO-1) regulation expression, monocyte adhesion to the endothelium via ITGAM expression on monocytes. Moreover, it helps establish an adaptive humoral immunity by regulating primary resting B cells and follicular helper T cells and participates in the CD40-induced production of reactive oxygen species (ROS) after CD40 ligation in B cells through interaction with PIK3R1 that bridges ALOX5 with CD40. May also play a role in glucose homeostasis, regulation of insulin secretion and palmitic acid-induced insulin resistance via AMPK. Can regulate bone mineralization and fat cell differentiation increases in induced pluripotent stem cells. The sequence is that of Polyunsaturated fatty acid 5-lipoxygenase from Homo sapiens (Human).